The primary structure comprises 117 residues: Transcription elongation factor A protein-like 8 (117 aa).

Basic and acidic residues-rich tracts occupy residues 1-24 (MQKSCGENERKPQNMPKAEEDRPL) and 61-74 (YKEDSPVRHLDPEE). Residues 1–74 (MQKSCGENER…SPVRHLDPEE (74 aa)) are disordered. Positions 73 to 100 (EEMIRGADELERLREEIRRVRNKFVMMH) form a coiled coil.

This sequence belongs to the TFS-II family. TFA subfamily.

The protein resides in the nucleus. Its function is as follows. May be involved in transcriptional regulation. In Bos taurus (Bovine), this protein is Transcription elongation factor A protein-like 8 (TCEAL8).